A 206-amino-acid polypeptide reads, in one-letter code: dCTP deaminase, dUMP-forming (206 aa).

DCTP is bound by residues 117–122, D135, 143–145, Q163, Y177, K184, and Q188; these read RSSFGR and TLE. E145 (proton donor/acceptor) is an active-site residue.

The protein belongs to the dCTP deaminase family. As to quaternary structure, homotrimer.

The enzyme catalyses dCTP + 2 H2O = dUMP + NH4(+) + diphosphate. Its pathway is pyrimidine metabolism; dUMP biosynthesis; dUMP from dCTP: step 1/1. Functionally, bifunctional enzyme that catalyzes both the deamination of dCTP to dUTP and the hydrolysis of dUTP to dUMP without releasing the toxic dUTP intermediate. This is dCTP deaminase, dUMP-forming from Methanococcus vannielii (strain ATCC 35089 / DSM 1224 / JCM 13029 / OCM 148 / SB).